The primary structure comprises 559 residues: Cation/calcium exchanger 2 (559 aa).

A run of 13 helical transmembrane segments spans residues 10–30 (FGYL…GFFT), 86–106 (GFPI…FYLL), 131–151 (VAGV…ASLV), 167–187 (TVVG…SISL), 203–223 (ICFF…GKIN), 224–244 (FWGA…VVLS), 331–351 (WSKP…SFLW), 362–382 (AGVV…IAGA), 393–413 (WLLP…YISA), 416–436 (LVAL…ILGL), 480–500 (FALG…SIVI), 506–526 (LLES…VLFS), and 531–551 (LGGV…SLRI).

It belongs to the Ca(2+):cation antiporter (CaCA) (TC 2.A.19) family. Cation/calcium exchanger (CCX) subfamily.

Its subcellular location is the membrane. Functionally, membrane-localized H(+)-dependent K(+) and Na(+) transporter. This Arabidopsis thaliana (Mouse-ear cress) protein is Cation/calcium exchanger 2 (CCX2).